The sequence spans 248 residues: NADP-dependent 3-hydroxy acid dehydrogenase YdfG (248 aa).

NADP(+)-binding positions include 7–12, 32–33, 54–55, and asparagine 81; these read GATAGF, RR, and DV. A substrate-binding site is contributed by serine 134. Residues tyrosine 147, lysine 151, and 177–185 contribute to the NADP(+) site; that span reads PGLVGGTEF. Tyrosine 147 functions as the Proton acceptor in the catalytic mechanism.

Belongs to the short-chain dehydrogenases/reductases (SDR) family. As to quaternary structure, homotetramer.

The enzyme catalyses 3-hydroxypropanoate + NADP(+) = 3-oxopropanoate + NADPH + H(+). It carries out the reaction L-allo-threonine + NADP(+) = aminoacetone + CO2 + NADPH. Functionally, NADP-dependent dehydrogenase with broad substrate specificity acting on 3-hydroxy acids. Catalyzes the NADP-dependent oxidation of L-allo-threonine to L-2-amino-3-keto-butyrate, which is spontaneously decarboxylated into aminoacetone. Also acts on D-threonine, L-serine, D-serine, D-3-hydroxyisobutyrate, L-3-hydroxyisobutyrate, D-glycerate and L-glycerate. Able to catalyze the reduction of the malonic semialdehyde to 3-hydroxypropionic acid. YdfG is apparently supplementing RutE, the presumed malonic semialdehyde reductase involved in pyrimidine degradation since both are able to detoxify malonic semialdehyde. This chain is NADP-dependent 3-hydroxy acid dehydrogenase YdfG, found in Escherichia coli O6:H1 (strain CFT073 / ATCC 700928 / UPEC).